A 276-amino-acid polypeptide reads, in one-letter code: Probable endonuclease 4 (276 aa).

Residues His-67, His-107, Glu-142, Asp-176, His-179, His-211, Asp-224, His-226, and Glu-256 each coordinate Zn(2+).

It belongs to the AP endonuclease 2 family. It depends on Zn(2+) as a cofactor.

The enzyme catalyses Endonucleolytic cleavage to 5'-phosphooligonucleotide end-products.. Endonuclease IV plays a role in DNA repair. It cleaves phosphodiester bonds at apurinic or apyrimidinic (AP) sites, generating a 3'-hydroxyl group and a 5'-terminal sugar phosphate. This is Probable endonuclease 4 from Methanosphaera stadtmanae (strain ATCC 43021 / DSM 3091 / JCM 11832 / MCB-3).